The primary structure comprises 275 residues: Large ribosomal subunit protein uL2 (275 aa).

Over residues 38–53 (NSKAGRNNNGRITTRH) the composition is skewed to polar residues. Disordered stretches follow at residues 38–59 (NSKA…GGHK) and 224–257 (AMNP…KGFR).

The protein belongs to the universal ribosomal protein uL2 family. Part of the 50S ribosomal subunit. Forms a bridge to the 30S subunit in the 70S ribosome.

Functionally, one of the primary rRNA binding proteins. Required for association of the 30S and 50S subunits to form the 70S ribosome, for tRNA binding and peptide bond formation. It has been suggested to have peptidyltransferase activity; this is somewhat controversial. Makes several contacts with the 16S rRNA in the 70S ribosome. This is Large ribosomal subunit protein uL2 from Burkholderia thailandensis (strain ATCC 700388 / DSM 13276 / CCUG 48851 / CIP 106301 / E264).